We begin with the raw amino-acid sequence, 552 residues long: uncharacterized protein (552 aa).

Residues 8-200 (KLFAEMIIQG…LAIVYAGFLK (193 aa)) form the DhaL domain.

This is an uncharacterized protein from Staphylococcus saprophyticus subsp. saprophyticus (strain ATCC 15305 / DSM 20229 / NCIMB 8711 / NCTC 7292 / S-41).